A 277-amino-acid chain; its full sequence is MSGPILVFDSGIGGLSVLAEIRKRLPAENYCYLFDNARLPYGDLSESELIRGCVELICQQVQQVEAKIVVVACNTASTLVLPVLRQRLTIPVVGVVPAIKPAALLSKRKHIGVLATPGTVSRDYTHGLISQFAEDCQVDLFGSSELVMLAEQKAAKLPVNNQQLAKILAPIKASKLDVLVLGCTHFPMIKEELSQYLGESVLLLDSGEAIANRVASLLEPAALSEALHSGTTLHGGANSGTKGIGVIHAAYTQAITAGLNITLQEYGISDSSLIVTK.

Substrate is bound by residues D9–S10 and Y41–G42. The active-site Proton donor/acceptor is the C73. Residue N74–T75 participates in substrate binding. C183 functions as the Proton donor/acceptor in the catalytic mechanism. Substrate is bound at residue T184–H185.

Belongs to the aspartate/glutamate racemases family.

The enzyme catalyses L-glutamate = D-glutamate. It participates in cell wall biogenesis; peptidoglycan biosynthesis. Functionally, provides the (R)-glutamate required for cell wall biosynthesis. This is Glutamate racemase from Shewanella denitrificans (strain OS217 / ATCC BAA-1090 / DSM 15013).